Consider the following 419-residue polypeptide: UDP-N-acetylglucosamine 1-carboxyvinyltransferase (419 aa).

Residue 22 to 23 (KN) coordinates phosphoenolpyruvate. Arg-93 serves as a coordination point for UDP-N-acetyl-alpha-D-glucosamine. The Proton donor role is filled by Cys-117. 2-(S-cysteinyl)pyruvic acid O-phosphothioketal is present on Cys-117. Residues Asp-307 and Ile-329 each contribute to the UDP-N-acetyl-alpha-D-glucosamine site.

The protein belongs to the EPSP synthase family. MurA subfamily.

It is found in the cytoplasm. The enzyme catalyses phosphoenolpyruvate + UDP-N-acetyl-alpha-D-glucosamine = UDP-N-acetyl-3-O-(1-carboxyvinyl)-alpha-D-glucosamine + phosphate. Its pathway is cell wall biogenesis; peptidoglycan biosynthesis. Its function is as follows. Cell wall formation. Adds enolpyruvyl to UDP-N-acetylglucosamine. In Shewanella piezotolerans (strain WP3 / JCM 13877), this protein is UDP-N-acetylglucosamine 1-carboxyvinyltransferase.